The chain runs to 225 residues: 3-dehydroquinate dehydratase (225 aa).

Residues serine 6, 30–32, and arginine 62 contribute to the 3-dehydroquinate site; that span reads EWR. Histidine 118 functions as the Proton donor/acceptor in the catalytic mechanism. The Schiff-base intermediate with substrate role is filled by lysine 143. Positions 186, 205, and 209 each coordinate 3-dehydroquinate.

It belongs to the type-I 3-dehydroquinase family. In terms of assembly, homodimer.

The catalysed reaction is 3-dehydroquinate = 3-dehydroshikimate + H2O. The protein operates within metabolic intermediate biosynthesis; chorismate biosynthesis; chorismate from D-erythrose 4-phosphate and phosphoenolpyruvate: step 3/7. Functionally, involved in the third step of the chorismate pathway, which leads to the biosynthesis of aromatic amino acids. Catalyzes the cis-dehydration of 3-dehydroquinate (DHQ) and introduces the first double bond of the aromatic ring to yield 3-dehydroshikimate. In Streptococcus pneumoniae (strain Hungary19A-6), this protein is 3-dehydroquinate dehydratase.